The primary structure comprises 46 residues: Putative antitoxin VapB3 (46 aa).

Belongs to the UPF0165 family.

In terms of biological role, possibly the antitoxin component of a type II toxin-antitoxin (TA) system. Its cognate toxin is VapC3 (Potential). This is Putative antitoxin VapB3 (vapB3) from Pyrococcus furiosus (strain ATCC 43587 / DSM 3638 / JCM 8422 / Vc1).